Reading from the N-terminus, the 241-residue chain is Small ribosomal subunit protein uS2c (241 aa).

The protein belongs to the universal ribosomal protein uS2 family.

The protein resides in the plastid. It localises to the chloroplast. The sequence is that of Small ribosomal subunit protein uS2c (rps2) from Porphyra purpurea (Red seaweed).